Reading from the N-terminus, the 147-residue chain is UPF0306 protein YhbP (147 aa).

Belongs to the UPF0306 family.

This is UPF0306 protein YhbP from Shigella sonnei (strain Ss046).